The sequence spans 277 residues: Release factor glutamine methyltransferase (277 aa).

S-adenosyl-L-methionine-binding positions include G119–G123, D142, and N184. Residue N184 to Y187 coordinates substrate.

This sequence belongs to the protein N5-glutamine methyltransferase family. PrmC subfamily.

It catalyses the reaction L-glutaminyl-[peptide chain release factor] + S-adenosyl-L-methionine = N(5)-methyl-L-glutaminyl-[peptide chain release factor] + S-adenosyl-L-homocysteine + H(+). Methylates the class 1 translation termination release factors RF1/PrfA and RF2/PrfB on the glutamine residue of the universally conserved GGQ motif. The chain is Release factor glutamine methyltransferase from Enterococcus faecalis (strain ATCC 700802 / V583).